The following is a 577-amino-acid chain: BAG family molecular chaperone regulator 3 (577 aa).

Residues methionine 1–glycine 17 show a composition bias toward polar residues. 3 disordered regions span residues methionine 1 to isoleucine 81, threonine 126 to leucine 207, and proline 229 to valine 427. At serine 2 the chain carries N-acetylserine. WW domains follow at residues aspartate 22–valine 56 and threonine 126–methionine 157. Phosphoserine is present on serine 138. The residue at position 141 (arginine 141) is an Omega-N-methylarginine. Positions proline 158–serine 204 are enriched in low complexity. Phosphoserine is present on residues serine 179 and serine 204. The segment covering isoleucine 256–proline 265 has biased composition (basic and acidic residues). Arginine 267 is subject to Omega-N-methylarginine. Residues serine 280, serine 281, and serine 285 each carry the phosphoserine modification. At threonine 291 the chain carries Phosphothreonine. Serine 297 bears the Phosphoserine mark. 2 stretches are compositionally biased toward pro residues: residues proline 332–histidine 341 and isoleucine 376–proline 392. Serine 380, serine 382, and serine 390 each carry phosphoserine. The region spanning glycine 426–alanine 503 is the BAG domain. A Glycyl lysine isopeptide (Lys-Gly) (interchain with G-Cter in SUMO1); alternate cross-link involves residue lysine 450. Lysine 450 participates in a covalent cross-link: Glycyl lysine isopeptide (Lys-Gly) (interchain with G-Cter in SUMO2); alternate. A disordered region spans residues glutamine 524–proline 577. A compositionally biased stretch (basic and acidic residues) spans alanine 535–glutamine 548.

In terms of assembly, forms a ternary complex with HSPA1A/HSP70 and HSPB8, serving as scaffold subunit. Component of the chaperone-assisted selective autophagy (CASA) complex consisting of BAG3, HSPA8/HSC70, HSPB8 and STUB1/CHIP. Binds to the ATPase domain of HSP70 chaperones. Interacts with BCL2. Interacts with phospholipase C-gamma proteins. Interacts with DNAJB1 and DNAJB6. Interacts (via BAG domain) with HSF1; this interaction occurs in normal and heat-shocked cells. Interacts with HSPA8/HSC70 (via NBD), HSPA1A (via NBD) and HSPA1B (via NBD). Interacts (via WW domain 1) with SYNPO2 (via PPPY motif). Interacts with HSPB8.

It localises to the nucleus. Its subcellular location is the cytoplasm. Its function is as follows. Co-chaperone and adapter protein that connects different classes of molecular chaperones including heat shock proteins 70 (HSP70s), e.g. HSPA1A/HSP70 or HSPA8/HSC70, and small heat shock proteins (sHSPs), e.g. HSPB8. Acts as a nucleotide-exchange factor (NEF) promoting the release of ADP from HSP70s, thereby triggering client protein release. Nucleotide release is mediated via BAG3 binding to the nucleotide-binding domain (NBD) of HSP70s, whereas client release is mediated via its binding to the substrate-binding domain (SBD). Has anti-apoptotic activity. Plays a role in the HSF1 nucleocytoplasmic transport. The chain is BAG family molecular chaperone regulator 3 (Bag3) from Mus musculus (Mouse).